The chain runs to 258 residues: Indole-3-glycerol phosphate synthase (258 aa).

It belongs to the TrpC family.

The catalysed reaction is 1-(2-carboxyphenylamino)-1-deoxy-D-ribulose 5-phosphate + H(+) = (1S,2R)-1-C-(indol-3-yl)glycerol 3-phosphate + CO2 + H2O. It functions in the pathway amino-acid biosynthesis; L-tryptophan biosynthesis; L-tryptophan from chorismate: step 4/5. In Exiguobacterium sibiricum (strain DSM 17290 / CCUG 55495 / CIP 109462 / JCM 13490 / 255-15), this protein is Indole-3-glycerol phosphate synthase.